The chain runs to 312 residues: Translation initiation factor IF3-2, chloroplastic (312 aa).

A chloroplast-targeting transit peptide spans 1–55 (MAGITSSTVGFNAVFTGITKTVSSHSLFSVDSKLCSLRLSKTELSFTNLTPSPRR). Residues 253-263 (EMIRKPQEPPT) show a composition bias toward basic and acidic residues. The tract at residues 253–312 (EMIRKPQEPPTRKKKKTAENEASASAAEITAEPEPEPEPEPEPEPEPEPEPEPEPLQIDS) is disordered. Residues 272–282 (NEASASAAEIT) show a composition bias toward low complexity. Over residues 283-305 (AEPEPEPEPEPEPEPEPEPEPEP) the composition is skewed to acidic residues.

This sequence belongs to the IF-3 family. In terms of assembly, monomer. Highly expressed in young, newly emerged leaves.

Its subcellular location is the plastid. It is found in the chloroplast. Functionally, chloroplast translation initiation factor that is essential for the coordination of leaf and chloroplast development. IF-3 binds to the 30S ribosomal subunit and shifts the equilibrium between 70S ribosomes and their 50S and 30S subunits in favor of the free subunits, thus enhancing the availability of 30S subunits on which protein synthesis initiation begins. The chain is Translation initiation factor IF3-2, chloroplastic from Arabidopsis thaliana (Mouse-ear cress).